We begin with the raw amino-acid sequence, 841 residues long: Follistatin-related protein 4 (841 aa).

The N-terminal stretch at 1-22 is a signal peptide; sequence MKPGGFWPHLALLGVSLPAVLG. The interval 29-54 is disordered; that stretch reads SRSPNMVPGESQAEETRGFEVTRREG. Residues 42-54 are compositionally biased toward basic and acidic residues; that stretch reads EETRGFEVTRREG. Residues 80–134 form the Kazal-like domain; sequence TTGQPSCQCLEVCRPRYMPVCGSDGRLYGNHCELRRAACLLGKRIVSVHSKDCFL. Disulfide bonds link C86–C118, C92–C111, and C100–C132. EF-hand domains are found at residues 173–208 and 225–247; these read QKRLLVESLFKDLDADGNGHLGSLELAQYVLKEQDM and DYNSDGSLTLGEFYTAFQVIQLS. Ca(2+) contacts are provided by D186, D188, N190, H192, E197, D225, N227, D229, S231, and E236. Ig-like domains lie at 250–336 and 340–425; these read PEDK…VLQV and PVIR…EDIS. Cystine bridges form between C269–C320 and C361–C412. Residue N317 is glycosylated (N-linked (GlcNAc...) asparagine).

Its subcellular location is the secreted. In Mus musculus (Mouse), this protein is Follistatin-related protein 4 (Fstl4).